The chain runs to 153 residues: MRLRVVAVGRDRSGLYAPAIEEYAKRLGRYVKFELVEVPEARKHAGTAQARDEEAEALLAKLGPRERVIALDERGAEWTSVAFAERVRRWTEGGRDVALVIGGSDGLSRAVLDRAEETLALSRMTLAHRLARLVLVEQLYRAMTILRGEPYHK.

S-adenosyl-L-methionine contacts are provided by residues L71, G102, and 121 to 126; that span reads LSRMTL.

This sequence belongs to the RNA methyltransferase RlmH family. Homodimer.

Its subcellular location is the cytoplasm. The enzyme catalyses pseudouridine(1915) in 23S rRNA + S-adenosyl-L-methionine = N(3)-methylpseudouridine(1915) in 23S rRNA + S-adenosyl-L-homocysteine + H(+). Its function is as follows. Specifically methylates the pseudouridine at position 1915 (m3Psi1915) in 23S rRNA. The sequence is that of Ribosomal RNA large subunit methyltransferase H from Anaeromyxobacter sp. (strain Fw109-5).